The following is a 501-amino-acid chain: Sucrose transport protein SUT2 (501 aa).

Topologically, residues Met-1 to Ala-31 are cytoplasmic. A helical membrane pass occupies residues Ser-32 to Val-52. Topologically, residues Gln-53–Leu-55 are extracellular. A helical transmembrane segment spans residues Gly-56–Val-76. Topologically, residues Gln-77 to Arg-98 are cytoplasmic. A helical transmembrane segment spans residues Pro-99–Ala-119. Topologically, residues Asp-120–Arg-135 are extracellular. Residues Leu-136–Thr-156 traverse the membrane as a helical segment. The Cytoplasmic portion of the chain corresponds to Gln-157 to Arg-176. A helical membrane pass occupies residues Ile-177–Gly-197. Topologically, residues Ala-198 to Lys-222 are extracellular. Residues Ser-223–Val-243 traverse the membrane as a helical segment. Topologically, residues Gln-244–Pro-278 are cytoplasmic. The helical transmembrane segment at Val-279–Phe-299 threads the bilayer. At Asp-300–Arg-327 the chain is on the extracellular side. A helical transmembrane segment spans residues Met-328–Glu-348. The Cytoplasmic portion of the chain corresponds to Lys-349 to Ala-356. A helical transmembrane segment spans residues Gly-357–Ile-377. The Extracellular segment spans residues Thr-378–Thr-394. Residues Gly-395–Tyr-415 traverse the membrane as a helical segment. Topologically, residues Ser-416 to Gln-433 are cytoplasmic. A helical membrane pass occupies residues Gly-434–Gly-454. Topologically, residues Ser-455 to Ala-467 are extracellular. A helical membrane pass occupies residues Pro-468–Leu-488. At Pro-489–Arg-501 the chain is on the cytoplasmic side.

The protein belongs to the glycoside-pentoside-hexuronide (GPH) cation symporter transporter (TC 2.A.2.4) family. In terms of assembly, homodimer. In terms of tissue distribution, widely expressed.

It localises to the cell membrane. Its pathway is glycan biosynthesis; sucrose metabolism. Responsible for the transport of sucrose into the cell, with the concomitant uptake of protons (symport system). May also transport other glucosides. The chain is Sucrose transport protein SUT2 (SUT2) from Oryza sativa subsp. japonica (Rice).